The following is a 208-amino-acid chain: dITP/XTP pyrophosphatase (208 aa).

11-16 (TGNAKK) provides a ligand contact to substrate. Catalysis depends on D73, which acts as the Proton acceptor. D73 contributes to the Mg(2+) binding site. Substrate contacts are provided by residues S74, 157 to 160 (FGYD), K180, and 185 to 186 (HR).

Belongs to the HAM1 NTPase family. As to quaternary structure, homodimer. Mg(2+) is required as a cofactor.

It carries out the reaction XTP + H2O = XMP + diphosphate + H(+). The enzyme catalyses dITP + H2O = dIMP + diphosphate + H(+). It catalyses the reaction ITP + H2O = IMP + diphosphate + H(+). Functionally, pyrophosphatase that catalyzes the hydrolysis of nucleoside triphosphates to their monophosphate derivatives, with a high preference for the non-canonical purine nucleotides XTP (xanthosine triphosphate), dITP (deoxyinosine triphosphate) and ITP. Seems to function as a house-cleaning enzyme that removes non-canonical purine nucleotides from the nucleotide pool, thus preventing their incorporation into DNA/RNA and avoiding chromosomal lesions. This chain is dITP/XTP pyrophosphatase, found in Rhodopirellula baltica (strain DSM 10527 / NCIMB 13988 / SH1).